Reading from the N-terminus, the 111-residue chain is uncharacterized protein (111 aa).

Residues 43–72 (NGRAEETEADAPLPEEPSLPDLPDLSDLDS) are disordered. Residues 61–72 (LPDLPDLSDLDS) show a composition bias toward low complexity.

This is an uncharacterized protein from Homo sapiens (Human).